The chain runs to 94 residues: Small ribosomal subunit protein uS19 (94 aa).

This sequence belongs to the universal ribosomal protein uS19 family.

Protein S19 forms a complex with S13 that binds strongly to the 16S ribosomal RNA. The sequence is that of Small ribosomal subunit protein uS19 from Caldicellulosiruptor saccharolyticus (strain ATCC 43494 / DSM 8903 / Tp8T 6331).